Consider the following 175-residue polypeptide: Co-chaperone protein HscB homolog (175 aa).

One can recognise a J domain in the interval 7–79 (SHFDLFHLPA…LKRASYLLSL (73 aa)).

Belongs to the HscB family. In terms of assembly, interacts with HscA and stimulates its ATPase activity.

Functionally, co-chaperone involved in the maturation of iron-sulfur cluster-containing proteins. Seems to help targeting proteins to be folded toward HscA. This chain is Co-chaperone protein HscB homolog, found in Burkholderia cenocepacia (strain ATCC BAA-245 / DSM 16553 / LMG 16656 / NCTC 13227 / J2315 / CF5610) (Burkholderia cepacia (strain J2315)).